The primary structure comprises 473 residues: Xylosidase/arabinosidase (473 aa).

Catalysis depends on Asp18, which acts as the Proton acceptor. Glu209 functions as the Proton donor in the catalytic mechanism.

Belongs to the glycosyl hydrolase 43 family. In terms of assembly, homotetramer.

The enzyme catalyses Hydrolysis of (1-&gt;4)-beta-D-xylans, to remove successive D-xylose residues from the non-reducing termini.. The catalysed reaction is Hydrolysis of terminal non-reducing alpha-L-arabinofuranoside residues in alpha-L-arabinosides.. This Thermoclostridium stercorarium (Clostridium stercorarium) protein is Xylosidase/arabinosidase (xylA).